We begin with the raw amino-acid sequence, 306 residues long: Type 3 secretion system translocon protein SctB (306 aa).

Residues 128 to 152 (LMIAMAVVSGIMAATSTVASAFSIA) form a helical membrane-spanning segment.

It belongs to the SctB/YopD family. As to quaternary structure, the core secretion machinery of the T3SS is composed of approximately 20 different proteins, including cytoplasmic components, a base, an export apparatus and a needle. This subunit is involved in the formation of a pore, called the translocon, in host membrane. Interacts with YopB/SctE and YopE. Together with YopB/SctE, forms a multimeric integral membrane complex with a mass of between 500 and 700 kDa. Interacts with its cognate chaperone SycD.

It is found in the secreted. It localises to the host membrane. In terms of biological role, component of the type III secretion system (T3SS), also called injectisome, which is used to inject bacterial effector proteins into eukaryotic host cells. YopB/SctE and YopD/SctB are inserted into the host membrane where they form a pore and allow the translocation of effector proteins into the cytosol of target cells. Its function is as follows. Involved in pathogenesis. Essential for the establishment of Yersinia infections in a mouse model system, but not for the targeting of effector Yops. May modulate the host's immune response at a distance from the site of infection. This chain is Type 3 secretion system translocon protein SctB, found in Yersinia enterocolitica.